Reading from the N-terminus, the 239-residue chain is O-methyltransferase ankF (239 aa).

Residues E71, 73-74 (GT), S79, E98, and A127 contribute to the S-adenosyl-L-methionine site.

Belongs to the class I-like SAM-binding methyltransferase superfamily. Cation-dependent O-methyltransferase family.

It catalyses the reaction NK13650 B + S-adenosyl-L-methionine = NK13650 D + S-adenosyl-L-homocysteine + H(+). It functions in the pathway secondary metabolite biosynthesis. O-methyltransferase; part of the ank cluster that mediates the biosynthesis of NK13650 C, a highly modified cyclo-arginine-tyrosine dipeptide. AnkF converts NK13650 B to produce NK13650 D via methylation of the C-17 phenol group. Within the pathway, the cyclodipeptide synthase ankA acts as the scaffold-generating enzyme and is responsible for formation of the cyclo-Arg-Tyr diketopiperazine (cRY) from L-Arg and L-Tyr. The ankA product cRY is desaturated by the cytochrome P450 monooxygenase ankB to yield a dehydro-cyclodipeptide intermediate. The FAD-dependent monooxygenase ankC then installs the m-OH, ankD catalyzes the attachment of L-homoserine, and ankE ligates citrate to the ankD product to yield NK13650 B. The O-methyltransferase ankF is responsible for methylation of the C-17 phenol group of NK13650 B to produce NK13650 D. Amidation of NK13650 D with L-Asp by ankG then leads to the production of NK13650 C, whereas amidation of NK13650 B produces NK13650 A. The protein is O-methyltransferase ankF of Aspergillus thermomutatus (Neosartorya pseudofischeri).